Reading from the N-terminus, the 151-residue chain is Ribosomal RNA large subunit methyltransferase H (151 aa).

S-adenosyl-L-methionine contacts are provided by residues L73, G100, and 119–124 (LSKMTL).

The protein belongs to the RNA methyltransferase RlmH family. In terms of assembly, homodimer.

It localises to the cytoplasm. The enzyme catalyses pseudouridine(1915) in 23S rRNA + S-adenosyl-L-methionine = N(3)-methylpseudouridine(1915) in 23S rRNA + S-adenosyl-L-homocysteine + H(+). Its function is as follows. Specifically methylates the pseudouridine at position 1915 (m3Psi1915) in 23S rRNA. The protein is Ribosomal RNA large subunit methyltransferase H of Campylobacter lari (strain RM2100 / D67 / ATCC BAA-1060).